The chain runs to 672 residues: Leucine-rich repeat receptor-like protein kinase PXC1 (672 aa).

The signal sequence occupies residues 1 to 21 (MAAKPLLLPLLLLLHLSITLA). At 22–269 (QNDTNALTLF…IHSHRGIKPG (248 aa)) the chain is on the extracellular side. Asn-23, Asn-44, and Asn-101 each carry an N-linked (GlcNAc...) asparagine glycan. The LRR 1 repeat unit spans residues 87 to 110 (LDQLRLLDLHDNRLNGTVSPLTNC). Lys-111 participates in a covalent cross-link: Glycyl lysine isopeptide (Lys-Gly) (interchain with G-Cter in ubiquitin). 4 LRR repeats span residues 112–134 (NLRL…ISFL), 135–158 (KRMI…ILGF), 160–181 (RVLT…FSQM), and 182–205 (KSLL…VVKK). N-linked (GlcNAc...) asparagine glycosylation is found at Asn-188 and Asn-197. Polar residues predominate over residues 233–249 (ESSNTDQIVPSNPTSIP). Residues 233–254 (ESSNTDQIVPSNPTSIPHSPVS) form a disordered region. A helical transmembrane segment spans residues 270-290 (IIAAVIGGCVAVIVLVSFGFA). Over 291 to 672 (FCCGRLDRNG…MSPSLATTDG (382 aa)) the chain is Cytoplasmic. The interval 300–333 (GERSKSGSVETGFVGGGEGKRRSSYGEGGESDAT) is disordered. In terms of domain architecture, Protein kinase spans 357–645 (KASAEMLGKG…AEVVKMVEEI (289 aa)). ATP contacts are provided by residues 363–371 (LGKGSLGTV) and Lys-386. A disordered region spans residues 650–672 (SPVGEDFDESRNSMSPSLATTDG). Positions 661-672 (NSMSPSLATTDG) are enriched in polar residues.

It belongs to the protein kinase superfamily. Ser/Thr protein kinase family. In terms of tissue distribution, expressed in the vascular strands of cotyledons, the shoot apex, hypocotyls, roots, leaves, stems and flowers.

The protein localises to the cell membrane. Functionally, leucine-rich repeat receptor-like protein kinase involved in secondary cell wall formation in xylem fibers. May play a role in a regulatory network which also incorporates the TDR/PXY signaling pathway and regulates the maturation of interfascicular fiber cells. May promote the initiation of secondary cell wall deposition during the procedure of cell expansion. In Arabidopsis thaliana (Mouse-ear cress), this protein is Leucine-rich repeat receptor-like protein kinase PXC1.